Reading from the N-terminus, the 174-residue chain is Nucleoside-triphosphatase THEP1 (174 aa).

Residues 7–14 (GRPGVGKT) and 94–101 (LIIIDEIG) each bind ATP.

Belongs to the THEP1 NTPase family.

The enzyme catalyses a ribonucleoside 5'-triphosphate + H2O = a ribonucleoside 5'-diphosphate + phosphate + H(+). In terms of biological role, has nucleotide phosphatase activity towards ATP, GTP, CTP, TTP and UTP. May hydrolyze nucleoside diphosphates with lower efficiency. The sequence is that of Nucleoside-triphosphatase THEP1 from Thermotoga sp. (strain RQ2).